Consider the following 236-residue polypeptide: Uridylate kinase (236 aa).

10-13 (KLSG) contributes to the ATP binding site. Gly52 contacts UMP. ATP contacts are provided by Gly53 and Arg57. UMP is bound by residues Asp72 and 133 to 140 (TGNPFFTT). 3 residues coordinate ATP: Thr160, Tyr166, and Asp169.

The protein belongs to the UMP kinase family. Homohexamer.

Its subcellular location is the cytoplasm. It carries out the reaction UMP + ATP = UDP + ADP. Its pathway is pyrimidine metabolism; CTP biosynthesis via de novo pathway; UDP from UMP (UMPK route): step 1/1. Its activity is regulated as follows. Inhibited by UTP. In terms of biological role, catalyzes the reversible phosphorylation of UMP to UDP. In Parabacteroides distasonis (strain ATCC 8503 / DSM 20701 / CIP 104284 / JCM 5825 / NCTC 11152), this protein is Uridylate kinase.